We begin with the raw amino-acid sequence, 846 residues long: Outer membrane channel protein CpnT (846 aa).

The tract at residues 1 to 443 is NTD; sequence MAPLAVDPAA…AGVRGLKERL (443 aa). Residues 442-630 are disordered; the sequence is RLEPTTPHLE…SGSEPPGLHA (189 aa). Composition is skewed to pro residues over residues 450-466 and 475-504; these read LEPP…PPRI and APAP…PPVD. Composition is skewed to low complexity over residues 508-517 and 562-586; these read EPVAPSSASA and APAT…HSTP. The interval 651–846 is TNT; it reads RLSDEAVDPQ…ELIRRGVLRQ (196 aa). The 96-residue stretch at 751–846 folds into the TNT domain; sequence YGPQLDRIGG…ELIRRGVLRQ (96 aa). Residue Arg-757 is part of the active site. Arg-780 serves as a coordination point for NAD(+). The active site involves Gln-822.

As to quaternary structure, interacts with the immunity factor for TNT (IFT) homolog. The C-terminal domain (TNT) is probably cleaved.

The protein localises to the cell outer membrane. It is found in the secreted. Its subcellular location is the cell surface. It catalyses the reaction NAD(+) + H2O = ADP-D-ribose + nicotinamide + H(+). Its activity is regulated as follows. Glycohydrolase activity is completely inhibited by interaction with the immunity factor for TNT (IFT) homolog. This inhibition protects M.bovis from self-poisoning. Its function is as follows. The N-terminal domain (NTD) forms an outer membrane channel and is used for uptake of nutrients across the outer membrane. Also confers susceptibility to structurally different antibiotics and antituberculosis drugs, and to toxic immune factors such as nitric oxide (NO). The C-terminal domain (TNT) is dispensable for normal growth in macrophages. This is Outer membrane channel protein CpnT from Mycobacterium bovis (strain BCG / Pasteur 1173P2).